A 314-amino-acid chain; its full sequence is Malate dehydrogenase (314 aa).

NAD(+) is bound by residues 12–17 (GAGNIG) and Asp36. Arg85 and Arg91 together coordinate substrate. Residues Asn98 and 121–123 (VTN) each bind NAD(+). Substrate is bound by residues Asn123 and Arg154. Catalysis depends on His178, which acts as the Proton acceptor.

This sequence belongs to the LDH/MDH superfamily. MDH type 3 family.

The catalysed reaction is (S)-malate + NAD(+) = oxaloacetate + NADH + H(+). In terms of biological role, catalyzes the reversible oxidation of malate to oxaloacetate. The polypeptide is Malate dehydrogenase (Wolbachia pipientis subsp. Culex pipiens (strain wPip)).